We begin with the raw amino-acid sequence, 552 residues long: 4-coumarate--CoA ligase-like 4 (552 aa).

The disordered stretch occupies residues 182–205 (ISATTPDPARRKDRVTQDDPATLL). A compositionally biased stretch (basic and acidic residues) spans 189 to 198 (PARRKDRVTQ). Residues Ser207, Ser208, Gly209, Thr210, Thr211, and Lys215 each contribute to the ATP site. Tyr256 contacts (E)-4-coumaroyl-AMP. Residue Lys277 participates in CoA binding. Residues 279–346 (ELPEMLRSIN…EKYPQVEILQ (68 aa)) form an SBD1 region. Residues Gly324, Gln346, Gly347, and Thr351 each contribute to the (E)-4-coumaroyl-AMP site. ATP contacts are provided by Gln346, Gly347, Thr351, Asp432, and Arg447. Residues 347 to 411 (GYGLTESTAI…IRGPYVMKGY (65 aa)) form an SBD2 region. (E)-4-coumaroyl-AMP is bound by residues Lys449 and Lys453. CoA-binding residues include Lys455 and Gly456. Lys538 contributes to the ATP binding site.

Belongs to the ATP-dependent AMP-binding enzyme family. Requires Mg(2+) as cofactor.

The enzyme catalyses (E)-4-coumarate + ATP + CoA = (E)-4-coumaroyl-CoA + AMP + diphosphate. The catalysed reaction is (E)-4-coumarate + ATP + H(+) = (E)-4-coumaroyl-AMP + diphosphate. It carries out the reaction (E)-4-coumaroyl-AMP + CoA = (E)-4-coumaroyl-CoA + AMP + H(+). Its function is as follows. Carboxylate--CoA ligase that may use 4-coumarate as substrate. Follows a two-step reaction mechanism, wherein the carboxylate substrate first undergoes adenylation by ATP, followed by a thioesterification in the presence of CoA to yield the final CoA thioester. In Oryza sativa subsp. japonica (Rice), this protein is 4-coumarate--CoA ligase-like 4 (4CLL4).